A 148-amino-acid chain; its full sequence is Ubiquitin-conjugating enzyme E2 30 (148 aa).

The 147-residue stretch at 1–147 folds into the UBC core domain; the sequence is MASKRINKEL…AQSWTQKYAM (147 aa). The Glycyl thioester intermediate role is filled by C85.

This sequence belongs to the ubiquitin-conjugating enzyme family. As to quaternary structure, interacts with RGLG3 and RGLG4. In terms of tissue distribution, ubiquitously expressed at very low levels.

It carries out the reaction S-ubiquitinyl-[E1 ubiquitin-activating enzyme]-L-cysteine + [E2 ubiquitin-conjugating enzyme]-L-cysteine = [E1 ubiquitin-activating enzyme]-L-cysteine + S-ubiquitinyl-[E2 ubiquitin-conjugating enzyme]-L-cysteine.. Its pathway is protein modification; protein ubiquitination. In terms of biological role, accepts the ubiquitin from the E1 complex and catalyzes its covalent attachment to other proteins. This is Ubiquitin-conjugating enzyme E2 30 (UBC30) from Arabidopsis thaliana (Mouse-ear cress).